Consider the following 521-residue polypeptide: Histidine--tRNA ligase (521 aa).

L-histidine-binding positions include 137–139 (DLT), Arg-164, Gln-180, Asp-184, Arg-338, and 342–343 (YY).

It belongs to the class-II aminoacyl-tRNA synthetase family.

The enzyme catalyses tRNA(His) + L-histidine + ATP = L-histidyl-tRNA(His) + AMP + diphosphate + H(+). Functionally, involved in protein synthesis. Catalyzes the specific attachment of an amino acid to its cognate tRNA in a 2 step reaction: the amino acid (AA) is first activated by ATP to form AA-AMP and then transferred to the acceptor end of the tRNA. Required for germ cell development. This is Histidine--tRNA ligase from Caenorhabditis elegans.